The chain runs to 934 residues: DNA topoisomerase 1 (934 aa).

Residues methionine 1–leucine 20 form a disordered region. The Toprim domain maps to arginine 18 to threonine 142. Mg(2+) is bound by residues glutamate 24 and aspartate 111. Positions aspartate 157–proline 616 constitute a Topo IA-type catalytic domain. Residues serine 191–glutamine 196 form an interaction with DNA region. Tyrosine 342 acts as the O-(5'-phospho-DNA)-tyrosine intermediate in catalysis. Disordered stretches follow at residues alanine 746–serine 765, lysine 842–aspartate 892, and leucine 905–aspartate 934. Positions arginine 911–aspartate 934 are enriched in basic residues.

It belongs to the type IA topoisomerase family. In terms of assembly, monomer. The cofactor is Mg(2+).

It carries out the reaction ATP-independent breakage of single-stranded DNA, followed by passage and rejoining.. Releases the supercoiling and torsional tension of DNA, which is introduced during the DNA replication and transcription, by transiently cleaving and rejoining one strand of the DNA duplex. Introduces a single-strand break via transesterification at a target site in duplex DNA. The scissile phosphodiester is attacked by the catalytic tyrosine of the enzyme, resulting in the formation of a DNA-(5'-phosphotyrosyl)-enzyme intermediate and the expulsion of a 3'-OH DNA strand. The free DNA strand then undergoes passage around the unbroken strand, thus removing DNA supercoils. Finally, in the religation step, the DNA 3'-OH attacks the covalent intermediate to expel the active-site tyrosine and restore the DNA phosphodiester backbone. The chain is DNA topoisomerase 1 from Mycobacterium bovis (strain ATCC BAA-935 / AF2122/97).